A 144-amino-acid chain; its full sequence is Peptide methionine sulfoxide reductase MsrB (144 aa).

Positions 1 to 12 (MDKQQGELRQRL) are enriched in basic and acidic residues. Residues 1 to 25 (MDKQQGELRQRLTPEQYAVTQEAAT) form a disordered region. A MsrB domain is found at 5–128 (QGELRQRLTP…NSAALKFIPV (124 aa)). Cys117 functions as the Nucleophile in the catalytic mechanism.

The protein belongs to the MsrB Met sulfoxide reductase family.

It carries out the reaction L-methionyl-[protein] + [thioredoxin]-disulfide + H2O = L-methionyl-(R)-S-oxide-[protein] + [thioredoxin]-dithiol. The sequence is that of Peptide methionine sulfoxide reductase MsrB from Lactiplantibacillus plantarum (strain ATCC BAA-793 / NCIMB 8826 / WCFS1) (Lactobacillus plantarum).